Here is a 407-residue protein sequence, read N- to C-terminus: MSHRKFSAPRHGHLGFLPHKRSRRHRGKVKSWPRDDPSQPVHLTAFLGYKAGMTHTLREVHRPGLKISKREEVEAVTIVETPPLVVVGVVGYVATPRGLRSFKTIFAEHLSDECRRRFYKDWHKSKKKAFTKACKRWRDADGKKQLQKDFAAMKKYCKVIRVIVHTQMKLLPFRQKKAHIMEIQLNGGTVAEKVAWVQARMEKQVPVHSVFSQSEVIDVIAVTKGRGVKGVTSRWHTKKLPRKTHKGLRKVACIGAWHPARVGCSIARAGQKGYHHRTELNKKIYRIGRGLHMEDGKMVRNNASTSYDVTDKSITPLGGFPHYGEVNNDFIMLKGCIAGTKKRVITLRKSLLVHHSRRALENIELKFIDTTSKFGHGCFQTAQEKRAFMGPQKKHLEKEKPETLGNM.

Residues 1-31 (MSHRKFSAPRHGHLGFLPHKRSRRHRGKVKS) show a composition bias toward basic residues. A disordered region spans residues 1–37 (MSHRKFSAPRHGHLGFLPHKRSRRHRGKVKSWPRDDP).

This sequence belongs to the universal ribosomal protein uL3 family. In terms of assembly, component of the large ribosomal subunit (LSU). Part of a LSU subcomplex, the 5S RNP which is composed of the 5S RNA, RPL5 and RPL11. Interacts with NVL in an ATP-dependent manner. Interacts with RRP1B. Interacts with IPO5, IPO7 and KPNB1; these interactions may be involved in RPL5 nuclear import for the assembly of ribosomal subunits. Interacts with RRP1B. As to expression, expression is restricted to striated muscles.

Heart- and skeletal muscle-specific component of the ribosome, which regulates muscle function. Component of the large ribosomal subunit in striated muscle cells: replaces the RPL3 paralog in the ribosome in these cells. The ribosome is a large ribonucleoprotein complex responsible for the synthesis of proteins in the cell. Inhibits myotube growth and muscle function. This chain is Large ribosomal subunit protein uL3-like, found in Mus musculus (Mouse).